The sequence spans 430 residues: C4-dicarboxylate transport protein (430 aa).

Transmembrane regions (helical) follow at residues 8-28, 44-64, 76-96, 144-164, 184-204, 222-242, 289-309, 326-346, and 352-372; these read SLYF…HFYP, LIKM…IAGM, IALL…LVIV, AFAS…GFAL, VIFG…FGAM, LIIC…GSIA, VVGL…SIYL, VIHQ…AAGV, and IVLA…LALI.

Belongs to the dicarboxylate/amino acid:cation symporter (DAACS) (TC 2.A.23) family.

It is found in the cell inner membrane. Functionally, responsible for the transport of dicarboxylates such as succinate, fumarate, and malate from the periplasm across the membrane. The sequence is that of C4-dicarboxylate transport protein from Yersinia enterocolitica serotype O:8 / biotype 1B (strain NCTC 13174 / 8081).